We begin with the raw amino-acid sequence, 316 residues long: Pantothenate kinase (316 aa).

95–102 contributes to the ATP binding site; that stretch reads GSVAVGKS.

The protein belongs to the prokaryotic pantothenate kinase family.

It is found in the cytoplasm. The enzyme catalyses (R)-pantothenate + ATP = (R)-4'-phosphopantothenate + ADP + H(+). The protein operates within cofactor biosynthesis; coenzyme A biosynthesis; CoA from (R)-pantothenate: step 1/5. This is Pantothenate kinase from Cronobacter sakazakii (strain ATCC BAA-894) (Enterobacter sakazakii).